Reading from the N-terminus, the 230-residue chain is GTP cyclohydrolase III (230 aa).

Belongs to the archaeal-type GTP cyclohydrolase family.

It carries out the reaction GTP + 3 H2O = 2-amino-5-formylamino-6-(5-phospho-D-ribosylamino)pyrimidin-4(3H)-one + 2 phosphate + 2 H(+). Its function is as follows. Catalyzes the formation of 2-amino-5-formylamino-6-ribofuranosylamino-4(3H)-pyrimidinone ribonucleotide monophosphate and inorganic phosphate from GTP. Also has an independent pyrophosphate phosphohydrolase activity. This chain is GTP cyclohydrolase III, found in Saccharolobus islandicus (strain M.16.27) (Sulfolobus islandicus).